The chain runs to 901 residues: Protein translocase subunit SecA (901 aa).

ATP-binding positions include Gln-87, 105–109 (GEGKT), and Asp-512. Positions 839 to 901 (QMEEQRRQES…KYKQCHGRLA (63 aa)) are disordered. The span at 841–850 (EEQRRQESER) shows a compositional bias: basic and acidic residues. Positions 885, 887, 896, and 897 each coordinate Zn(2+). Residues 891-901 (KKYKQCHGRLA) are compositionally biased toward basic residues.

Belongs to the SecA family. As to quaternary structure, monomer and homodimer. Part of the essential Sec protein translocation apparatus which comprises SecA, SecYEG and auxiliary proteins SecDF-YajC and YidC. Zn(2+) is required as a cofactor.

The protein localises to the cell inner membrane. Its subcellular location is the cytoplasm. The catalysed reaction is ATP + H2O + cellular proteinSide 1 = ADP + phosphate + cellular proteinSide 2.. In terms of biological role, part of the Sec protein translocase complex. Interacts with the SecYEG preprotein conducting channel. Has a central role in coupling the hydrolysis of ATP to the transfer of proteins into and across the cell membrane, serving both as a receptor for the preprotein-SecB complex and as an ATP-driven molecular motor driving the stepwise translocation of polypeptide chains across the membrane. The chain is Protein translocase subunit SecA from Erwinia tasmaniensis (strain DSM 17950 / CFBP 7177 / CIP 109463 / NCPPB 4357 / Et1/99).